The sequence spans 403 residues: S-adenosylmethionine synthase (403 aa).

His15 contacts ATP. Asp17 contacts Mg(2+). Residue Glu43 participates in K(+) binding. Residues Glu56 and Gln99 each contribute to the L-methionine site. The flexible loop stretch occupies residues 99 to 109; the sequence is QSPDINQGVDR. ATP is bound by residues 166 to 168, 232 to 233, Asp241, 247 to 248, Ala264, and Lys268; these read DAK, KF, and RK. Asp241 is a binding site for L-methionine. L-methionine is bound at residue Lys272.

Belongs to the AdoMet synthase family. In terms of assembly, homotetramer; dimer of dimers. It depends on Mg(2+) as a cofactor. K(+) is required as a cofactor.

The protein localises to the cytoplasm. The enzyme catalyses L-methionine + ATP + H2O = S-adenosyl-L-methionine + phosphate + diphosphate. It functions in the pathway amino-acid biosynthesis; S-adenosyl-L-methionine biosynthesis; S-adenosyl-L-methionine from L-methionine: step 1/1. In terms of biological role, catalyzes the formation of S-adenosylmethionine (AdoMet) from methionine and ATP. The overall synthetic reaction is composed of two sequential steps, AdoMet formation and the subsequent tripolyphosphate hydrolysis which occurs prior to release of AdoMet from the enzyme. This is S-adenosylmethionine synthase from Xanthomonas campestris pv. campestris (strain ATCC 33913 / DSM 3586 / NCPPB 528 / LMG 568 / P 25).